The chain runs to 113 residues: Transcriptional regulator RamA (113 aa).

One can recognise an HTH araC/xylS-type domain in the interval 9–107; sequence DTIVEWIDDN…NQPPGAYRKE (99 aa). 2 DNA-binding regions (H-T-H motif) span residues 26–47 and 74–97; these read DDIARHAGYSKWHLQRLFLQYK and VYDICLKYGFDSQQTFTRVFTRTF.

As to quaternary structure, monomer. Interacts with the C-terminus of RNAP subunit RpoA when part of class I or class II promoter complexes. Also interacts with sigma-70/RpoD in class II promoter complexes.

Its function is as follows. Transcriptional regulator. Binds to regulatory regions of target genes, including its own gene, efflux pump operon acrAB, antisense RNA gene micF, and various genes involved in lipid A biosynthesis, including lpxO and lpxL-2. Regulates expression of many genes, perhaps including its own; activates various lipid A biosynthetic genes, and as a result of activating acrAB, confers multidrug resistance. Plays a role in virulence and survival in host cells. This is Transcriptional regulator RamA from Klebsiella pneumoniae subsp. pneumoniae (strain HS11286).